We begin with the raw amino-acid sequence, 206 residues long: Thymidylate kinase (206 aa).

An ATP-binding site is contributed by 11–18 (GIDGAGKT).

The protein belongs to the thymidylate kinase family.

It catalyses the reaction dTMP + ATP = dTDP + ADP. Its function is as follows. Phosphorylation of dTMP to form dTDP in both de novo and salvage pathways of dTTP synthesis. This Burkholderia vietnamiensis (strain G4 / LMG 22486) (Burkholderia cepacia (strain R1808)) protein is Thymidylate kinase.